We begin with the raw amino-acid sequence, 104 residues long: Pyrimidine/purine nucleoside phosphorylase (104 aa).

Belongs to the nucleoside phosphorylase PpnP family.

The catalysed reaction is a purine D-ribonucleoside + phosphate = a purine nucleobase + alpha-D-ribose 1-phosphate. The enzyme catalyses adenosine + phosphate = alpha-D-ribose 1-phosphate + adenine. It catalyses the reaction cytidine + phosphate = cytosine + alpha-D-ribose 1-phosphate. It carries out the reaction guanosine + phosphate = alpha-D-ribose 1-phosphate + guanine. The catalysed reaction is inosine + phosphate = alpha-D-ribose 1-phosphate + hypoxanthine. The enzyme catalyses thymidine + phosphate = 2-deoxy-alpha-D-ribose 1-phosphate + thymine. It catalyses the reaction uridine + phosphate = alpha-D-ribose 1-phosphate + uracil. It carries out the reaction xanthosine + phosphate = alpha-D-ribose 1-phosphate + xanthine. Catalyzes the phosphorolysis of diverse nucleosides, yielding D-ribose 1-phosphate and the respective free bases. Can use uridine, adenosine, guanosine, cytidine, thymidine, inosine and xanthosine as substrates. Also catalyzes the reverse reactions. In Herminiimonas arsenicoxydans, this protein is Pyrimidine/purine nucleoside phosphorylase.